A 474-amino-acid chain; its full sequence is Cysteine--tRNA ligase (474 aa).

Position 27 (Cys27) interacts with Zn(2+). The 'HIGH' region motif lies at 29-39 (PTVYNYIHIGN). Zn(2+) contacts are provided by Cys212, His237, and Glu241. The 'KMSKS' region motif lies at 271–275 (KMSKS). ATP is bound at residue Lys274.

It belongs to the class-I aminoacyl-tRNA synthetase family. Monomer. It depends on Zn(2+) as a cofactor.

The protein resides in the cytoplasm. It carries out the reaction tRNA(Cys) + L-cysteine + ATP = L-cysteinyl-tRNA(Cys) + AMP + diphosphate. The chain is Cysteine--tRNA ligase from Lactobacillus delbrueckii subsp. bulgaricus (strain ATCC 11842 / DSM 20081 / BCRC 10696 / JCM 1002 / NBRC 13953 / NCIMB 11778 / NCTC 12712 / WDCM 00102 / Lb 14).